The following is a 590-amino-acid chain: MSDFWEKNKGSITSGLKKTGKVGLSGTKYVAKTGYQAGKKNWGGNKKDKQNKKQGEEDVDDELDEEPAHHASYPPRVVDPSYFPPPPSRTNPSQNVAGEHMPRQTYPAQPSIQQPVYQQPVYQQSAYPAQVPQQAPQPAPQQAQYVIQQPPPPPRNPGYQQLPSQQAYEEPAQYSYQQPPPQSGFQQPPQAGYQPTQQTYQPTQQTYQPTQQTYQRPAQPVPPPPSNQSPQQVIQQPPPPPRSGYQQSPPPQVGYQQPPPPPRAGYQQSPPPQFDYQQPPVQQHAHSGPLPPSRPSDQYLTPIQTQSTVHSQTRPYDLTAPHVKQRLEMQSVDLTNLPPPPTHRDRSSPPKSRESSPAGQSQKVHSGSTPPPTYESSQKDIESSMSSSSVTPSTQPALASRPSSISSQSRSNVPPPMPPKPNEPGMVDVSSFPPPPRPRPTPSMERETALKAQDPSTGPTPRGRLAGSKPPPPPVKPKPRNLAAGSGSGSGSLGSGNHTPLASVDSISQELSKVQLKKTNSKYTQEPTSSKLPPPAVPRKNFTPDKQGTPLPPNKNASLKSPTDQQDVNPFERYLKSAVPAENDRLHKPM.

Residues 1–571 are disordered; that stretch reads MSDFWEKNKG…PTDQQDVNPF (571 aa). Over residues 45 to 56 the composition is skewed to basic and acidic residues; that stretch reads NKKDKQNKKQGE. Composition is skewed to low complexity over residues 108 to 148 and 157 to 218; these read AQPS…YVIQ and PGYQ…QRPA. Residues 236 to 273 are compositionally biased toward pro residues; it reads QPPPPPRSGYQQSPPPQVGYQQPPPPPRAGYQQSPPPQ. Composition is skewed to polar residues over residues 275–285 and 295–314; these read DYQQPPVQQHA and PSDQ…SQTR. Residues 342–354 show a composition bias toward basic and acidic residues; the sequence is THRDRSSPPKSRE. The segment covering 358-368 has biased composition (polar residues); it reads AGQSQKVHSGS. Composition is skewed to low complexity over residues 383–393 and 400–411; these read SSMSSSSVTPS and SRPSSISSQSRS. Composition is skewed to pro residues over residues 413 to 422 and 432 to 441; these read VPPPMPPKPN and FPPPPRPRPT. 3 stretches are compositionally biased toward polar residues: residues 497 to 514, 521 to 531, and 555 to 568; these read NHTP…LSKV, SKYTQEPTSSK, and KNAS…QQDV.

It belongs to the AIM3 family.

The protein resides in the membrane raft. The protein is Altered inheritance of mitochondria protein 3 (AIM3) of Zygosaccharomyces rouxii (strain ATCC 2623 / CBS 732 / NBRC 1130 / NCYC 568 / NRRL Y-229).